A 250-amino-acid chain; its full sequence is Putative HTH-type transcriptional regulatory protein PAE1627 (250 aa).

Positions 129–183 constitute an HTH cro/C1-type domain; the sequence is LRAKRQQAGLSLGTLATNLGVTRETVYRYERGEIEAPLKIAEKLINMFGEDITKK. Residues 140–159 constitute a DNA-binding region (H-T-H motif); that stretch reads LGTLATNLGVTRETVYRYER.

The sequence is that of Putative HTH-type transcriptional regulatory protein PAE1627 from Pyrobaculum aerophilum (strain ATCC 51768 / DSM 7523 / JCM 9630 / CIP 104966 / NBRC 100827 / IM2).